Here is a 321-residue protein sequence, read N- to C-terminus: GTP 3',8-cyclase (321 aa).

The Radical SAM core domain maps to 5 to 227; sequence SYDRVVDYLR…DEGYDGASPS (223 aa). R14 provides a ligand contact to GTP. Positions 21 and 25 each coordinate [4Fe-4S] cluster. Residue Y27 participates in S-adenosyl-L-methionine binding. C28 provides a ligand contact to [4Fe-4S] cluster. R64 is a GTP binding site. G68 contacts S-adenosyl-L-methionine. T95 is a GTP binding site. S119 contacts S-adenosyl-L-methionine. K155 serves as a coordination point for GTP. M189 provides a ligand contact to S-adenosyl-L-methionine. Residues C249 and C252 each contribute to the [4Fe-4S] cluster site. 254-256 provides a ligand contact to GTP; the sequence is RIR. C266 serves as a coordination point for [4Fe-4S] cluster.

The protein belongs to the radical SAM superfamily. MoaA family. As to quaternary structure, monomer and homodimer. Requires [4Fe-4S] cluster as cofactor.

The enzyme catalyses GTP + AH2 + S-adenosyl-L-methionine = (8S)-3',8-cyclo-7,8-dihydroguanosine 5'-triphosphate + 5'-deoxyadenosine + L-methionine + A + H(+). Its pathway is cofactor biosynthesis; molybdopterin biosynthesis. Catalyzes the cyclization of GTP to (8S)-3',8-cyclo-7,8-dihydroguanosine 5'-triphosphate. The protein is GTP 3',8-cyclase of Sulfurimonas denitrificans (strain ATCC 33889 / DSM 1251) (Thiomicrospira denitrificans (strain ATCC 33889 / DSM 1251)).